The sequence spans 795 residues: Glycerol-3-phosphate acyltransferase 2, mitochondrial (795 aa).

A disordered region spans residues 1-21; it reads MATMLEGRCQTQPRSSPSGRE. Residues 1 to 305 are Cytoplasmic-facing; sequence MATMLEGRCQ…LGPRLSALGQ (305 aa). Positions 9-18 are enriched in polar residues; sequence CQTQPRSSPS. The tract at residues 180–331 is acyltransferase; sequence QLHKGQMKMV…DALLVPVAVT (152 aa). An HXXXXD motif motif is present at residues 205-210; the sequence is HKTLLD. Residues 306–332 form a helical membrane-spanning segment; it reads AWVGFVVQAVQVGIVPDALLVPVAVTY. Over 333 to 449 the chain is Mitochondrial intermembrane; that stretch reads DLVPDAPCDI…QLLVRRLSCH (117 aa). Residues 450-472 traverse the membrane as a helical segment; it reads VLSASVGSSAVMSTAIMATLLLF. Over 473 to 795 the chain is Cytoplasmic; sequence KHQKLLGEFS…EQFIRQFICS (323 aa). A Phosphoserine modification is found at serine 656. At threonine 660 the chain carries Phosphothreonine. Phosphoserine occurs at positions 662 and 664.

It belongs to the GPAT/DAPAT family. In terms of assembly, interacts with PIWIL2.

The protein resides in the mitochondrion outer membrane. It carries out the reaction sn-glycerol 3-phosphate + an acyl-CoA = a 1-acyl-sn-glycero-3-phosphate + CoA. The catalysed reaction is a 1-acyl-sn-glycero-3-phosphate + an acyl-CoA = a 1,2-diacyl-sn-glycero-3-phosphate + CoA. The enzyme catalyses 1-(9Z-octadecenoyl)-sn-glycero-3-phosphate + (9Z)-octadecenoyl-CoA = 1,2-di-(9Z-octadecenoyl)-sn-glycero-3-phosphate + CoA. It catalyses the reaction 1-(9Z-octadecenoyl)-sn-glycero-3-phosphate + (5Z,8Z,11Z,14Z)-eicosatetraenoyl-CoA = 1-(9Z)-octadecenoyl-2-(5Z,8Z,11Z,14Z)-eicosatetraenoyl-sn-glycero-3-phosphate + CoA. It carries out the reaction (5Z,8Z,11Z,14Z)-eicosatetraenoyl-CoA + sn-glycerol 3-phosphate = 1-(5Z,8Z,11Z,14Z-eicosatetraenoyl)-sn-glycero-3-phosphate + CoA. Its pathway is phospholipid metabolism; CDP-diacylglycerol biosynthesis; CDP-diacylglycerol from sn-glycerol 3-phosphate: step 1/3. Its activity is regulated as follows. Inhibited by N-ethylmaleimide (NEM). Its function is as follows. Transfers an acyl-group from acyl-ACP to the sn-1 position of glycerol-3-phosphate producing a lysophosphatidic acid (LPA), an essential step for the triacylglycerol (TAG) and glycerophospholipids. In vitro also transfers an acyl-group from acyl-ACP to the LPA producing a phosphatidic acid (PA). Prefers arachidonoyl-CoA as the acyl donor. Required for primary processing step during piRNA biosynthesis. Molecular mechanisms by which it promotes piRNA biosynthesis are unclear and do not involve its acyltransferase activity. The polypeptide is Glycerol-3-phosphate acyltransferase 2, mitochondrial (Homo sapiens (Human)).